Here is a 438-residue protein sequence, read N- to C-terminus: NADH-quinone oxidoreductase subunit D (438 aa).

It belongs to the complex I 49 kDa subunit family. In terms of assembly, NDH-1 is composed of 14 different subunits. Subunits NuoB, C, D, E, F, and G constitute the peripheral sector of the complex.

It localises to the cell membrane. The enzyme catalyses a quinone + NADH + 5 H(+)(in) = a quinol + NAD(+) + 4 H(+)(out). Its function is as follows. NDH-1 shuttles electrons from NADH, via FMN and iron-sulfur (Fe-S) centers, to quinones in the respiratory chain. The immediate electron acceptor for the enzyme in this species is believed to be a menaquinone. Couples the redox reaction to proton translocation (for every two electrons transferred, four hydrogen ions are translocated across the cytoplasmic membrane), and thus conserves the redox energy in a proton gradient. The protein is NADH-quinone oxidoreductase subunit D of Rhodococcus jostii (strain RHA1).